Consider the following 210-residue polypeptide: C4-dicarboxylate TRAP transporter small permease protein DctQ (210 aa).

4 helical membrane passes run 13 to 33, 77 to 97, 113 to 133, and 160 to 180; these read EGLI…YVVL, ALFA…AGHL, VLGV…CVAS, and IGLI…EILV.

The protein belongs to the TRAP transporter small permease family. The complex comprises the extracytoplasmic solute receptor protein DctP, and the two transmembrane proteins DctQ and DctM.

It is found in the cell inner membrane. Functionally, part of the tripartite ATP-independent periplasmic (TRAP) transport system DctPQM involved in C4-dicarboxylates uptake. The chain is C4-dicarboxylate TRAP transporter small permease protein DctQ from Pseudomonas aeruginosa (strain ATCC 15692 / DSM 22644 / CIP 104116 / JCM 14847 / LMG 12228 / 1C / PRS 101 / PAO1).